A 240-amino-acid chain; its full sequence is UDP-2,3-diacylglucosamine hydrolase (240 aa).

Residues aspartate 8, histidine 10, aspartate 41, asparagine 79, and histidine 114 each contribute to the Mn(2+) site. 79 to 80 (NR) lines the substrate pocket. Substrate-binding residues include aspartate 122, serine 160, asparagine 164, lysine 167, and histidine 195. Positions 195 and 197 each coordinate Mn(2+).

This sequence belongs to the LpxH family. It depends on Mn(2+) as a cofactor.

Its subcellular location is the cell inner membrane. It catalyses the reaction UDP-2-N,3-O-bis[(3R)-3-hydroxytetradecanoyl]-alpha-D-glucosamine + H2O = 2-N,3-O-bis[(3R)-3-hydroxytetradecanoyl]-alpha-D-glucosaminyl 1-phosphate + UMP + 2 H(+). It participates in glycolipid biosynthesis; lipid IV(A) biosynthesis; lipid IV(A) from (3R)-3-hydroxytetradecanoyl-[acyl-carrier-protein] and UDP-N-acetyl-alpha-D-glucosamine: step 4/6. Functionally, hydrolyzes the pyrophosphate bond of UDP-2,3-diacylglucosamine to yield 2,3-diacylglucosamine 1-phosphate (lipid X) and UMP by catalyzing the attack of water at the alpha-P atom. Involved in the biosynthesis of lipid A, a phosphorylated glycolipid that anchors the lipopolysaccharide to the outer membrane of the cell. This is UDP-2,3-diacylglucosamine hydrolase from Escherichia coli (strain SE11).